The sequence spans 286 residues: 33 kDa chaperonin (286 aa).

Cystine bridges form between C225–C227 and C258–C261.

It belongs to the HSP33 family. In terms of processing, under oxidizing conditions two disulfide bonds are formed involving the reactive cysteines. Under reducing conditions zinc is bound to the reactive cysteines and the protein is inactive.

Its subcellular location is the cytoplasm. Redox regulated molecular chaperone. Protects both thermally unfolding and oxidatively damaged proteins from irreversible aggregation. Plays an important role in the bacterial defense system toward oxidative stress. The polypeptide is 33 kDa chaperonin (Shewanella baltica (strain OS223)).